We begin with the raw amino-acid sequence, 187 residues long: ATP synthase subunit b (187 aa).

The helical transmembrane segment at 32–52 threads the bilayer; sequence NILDTNLINLAIIITVLFVFG.

It belongs to the ATPase B chain family. F-type ATPases have 2 components, F(1) - the catalytic core - and F(0) - the membrane proton channel. F(1) has five subunits: alpha(3), beta(3), gamma(1), delta(1), epsilon(1). F(0) has four main subunits: a(1), b(1), b'(1) and c(10-14). The alpha and beta chains form an alternating ring which encloses part of the gamma chain. F(1) is attached to F(0) by a central stalk formed by the gamma and epsilon chains, while a peripheral stalk is formed by the delta, b and b' chains.

The protein localises to the cellular thylakoid membrane. Functionally, f(1)F(0) ATP synthase produces ATP from ADP in the presence of a proton or sodium gradient. F-type ATPases consist of two structural domains, F(1) containing the extramembraneous catalytic core and F(0) containing the membrane proton channel, linked together by a central stalk and a peripheral stalk. During catalysis, ATP synthesis in the catalytic domain of F(1) is coupled via a rotary mechanism of the central stalk subunits to proton translocation. Component of the F(0) channel, it forms part of the peripheral stalk, linking F(1) to F(0). This is ATP synthase subunit b from Trichormus variabilis (strain ATCC 29413 / PCC 7937) (Anabaena variabilis).